The following is a 265-amino-acid chain: Small ribosomal subunit protein uS3 (265 aa).

The KH type-2 domain occupies 43–111 (IRTMLKTSLD…QIQLNILEVK (69 aa)). Residues 217 to 265 (AREQANQKSSRPERRNDRSDGRTGDRRTNAPRTAPAAEAAPVAAAGVEA) form a disordered region. The segment covering 226–244 (SRPERRNDRSDGRTGDRRT) has biased composition (basic and acidic residues). Over residues 250–265 (APAAEAAPVAAAGVEA) the composition is skewed to low complexity.

Belongs to the universal ribosomal protein uS3 family. Part of the 30S ribosomal subunit. Forms a tight complex with proteins S10 and S14.

Functionally, binds the lower part of the 30S subunit head. Binds mRNA in the 70S ribosome, positioning it for translation. The sequence is that of Small ribosomal subunit protein uS3 from Clavibacter michiganensis subsp. michiganensis (strain NCPPB 382).